Here is a 522-residue protein sequence, read N- to C-terminus: Leucine-rich repeat transmembrane neuronal protein 1 (522 aa).

The first 34 residues, 1–34 (MDFLLLGLCLYWLLRRPSGVVLCLLGACFQMLPA), serve as a signal peptide directing secretion. Residues 35–63 (APSGCPQLCRCEGRLLYCEALNPTEAPHN) form the LRRNT domain. The Extracellular portion of the chain corresponds to 35–427 (APSGCPQLCR…HAENAVQIHK (393 aa)). N-linked (GlcNAc...) asparagine glycosylation is present at asparagine 63. 10 LRR repeats span residues 64–87 (LSGLLGLSLRYNSLSELRAGQFTG), 89–111 (MQLTWLYLDHNHICSVQGDAFQK), 112–135 (LRRVKELTLSSNQITQLPNTTFRP), 137–159 (PNLRSVDLSYNKLQALAPDLFHG), 161–183 (RKLTTLHMRANAIQFVPVRIFQD), 184–207 (CRSLKFLDIGYNQLKSLARNSFAG), 209–231 (FKLTELHLEHNDLVKVNFAHFPR), 233–255 (ISLHSLCLRRNKVAIVVSSLDWV), 256–278 (WNLKKMDLSGNEIEYMEPHVFET), and 279–302 (VPHLQSLQLDSNRLTYIEPRILNS). Residue asparagine 130 is glycosylated (N-linked (GlcNAc...) asparagine). The region spanning 314-365 (NLWDCGRNVCALASWLSNFQGRYDGNLQCASPEYAQGEDVLDAVYAFHLCED) is the LRRCT domain. N-linked (GlcNAc...) asparagine glycosylation is present at asparagine 380. The tract at residues 382–401 (SDLGPPASSATTLADGGEGQ) is disordered. The chain crosses the membrane as a helical span at residues 428-448 (VVTGTMALIFSFLIVVLVLYV). At 449–522 (SWKCFPASLR…HQQPARECEV (74 aa)) the chain is on the cytoplasmic side.

Belongs to the LRRTM family.

The protein resides in the cell membrane. It localises to the postsynaptic cell membrane. In terms of biological role, exhibits strong synaptogenic activity, restricted to excitatory presynaptic differentiation, acting at both pre- and postsynaptic level. This chain is Leucine-rich repeat transmembrane neuronal protein 1 (LRRTM1), found in Pongo abelii (Sumatran orangutan).